A 97-amino-acid chain; its full sequence is HssA/B-like protein 44 (97 aa).

Disordered stretches follow at residues 1-22 (MTLFSSISSISSSISSSKSSIA) and 62-97 (ASTSSGGRGGRPGRGHGGPHGHGRGGSGSGSSCGCN). Residues 72 to 84 (RPGRGHGGPHGHG) are compositionally biased toward basic residues. The span at 85 to 97 (RGGSGSGSSCGCN) shows a compositional bias: gly residues.

It belongs to the hssA/B family.

This chain is HssA/B-like protein 44 (hssl44), found in Dictyostelium discoideum (Social amoeba).